The primary structure comprises 329 residues: Malate dehydrogenase (329 aa).

12 to 18 (GAAGQIG) contacts NAD(+). Residues arginine 95 and arginine 101 each contribute to the substrate site. NAD(+) is bound by residues asparagine 108, glutamine 115, and 132–134 (VGN). Substrate is bound by residues asparagine 134 and arginine 165. Residue histidine 190 is the Proton acceptor of the active site.

This sequence belongs to the LDH/MDH superfamily. MDH type 2 family.

It catalyses the reaction (S)-malate + NAD(+) = oxaloacetate + NADH + H(+). Its function is as follows. Catalyzes the reversible oxidation of malate to oxaloacetate. This is Malate dehydrogenase from Polynucleobacter necessarius subsp. necessarius (strain STIR1).